The following is a 159-amino-acid chain: Phosphopantetheine adenylyltransferase (159 aa).

Ser9 serves as a coordination point for substrate. ATP is bound by residues 9–10 (SF) and His17. Lys41, Leu73, and Lys87 together coordinate substrate. ATP-binding positions include 88–90 (GLR), Glu98, and 122–128 (YSFLSSS).

Belongs to the bacterial CoaD family. As to quaternary structure, homohexamer. The cofactor is Mg(2+).

The protein resides in the cytoplasm. It carries out the reaction (R)-4'-phosphopantetheine + ATP + H(+) = 3'-dephospho-CoA + diphosphate. It participates in cofactor biosynthesis; coenzyme A biosynthesis; CoA from (R)-pantothenate: step 4/5. Reversibly transfers an adenylyl group from ATP to 4'-phosphopantetheine, yielding dephospho-CoA (dPCoA) and pyrophosphate. In Streptomyces avermitilis (strain ATCC 31267 / DSM 46492 / JCM 5070 / NBRC 14893 / NCIMB 12804 / NRRL 8165 / MA-4680), this protein is Phosphopantetheine adenylyltransferase.